A 201-amino-acid polypeptide reads, in one-letter code: Recombination protein RecR (201 aa).

A C4-type zinc finger spans residues 57–72; that stretch reads CKYCRTFTEQEQCTIC. Residues 81–176 enclose the Toprim domain; the sequence is GQICVVESPA…TASRIAHGVP (96 aa).

This sequence belongs to the RecR family.

Its function is as follows. May play a role in DNA repair. It seems to be involved in an RecBC-independent recombinational process of DNA repair. It may act with RecF and RecO. The sequence is that of Recombination protein RecR from Photorhabdus laumondii subsp. laumondii (strain DSM 15139 / CIP 105565 / TT01) (Photorhabdus luminescens subsp. laumondii).